Reading from the N-terminus, the 342-residue chain is N-acetyl-gamma-glutamyl-phosphate reductase (342 aa).

The active site involves C149.

It belongs to the NAGSA dehydrogenase family. Type 1 subfamily.

Its subcellular location is the cytoplasm. It catalyses the reaction N-acetyl-L-glutamate 5-semialdehyde + phosphate + NADP(+) = N-acetyl-L-glutamyl 5-phosphate + NADPH + H(+). It participates in amino-acid biosynthesis; L-arginine biosynthesis; N(2)-acetyl-L-ornithine from L-glutamate: step 3/4. Functionally, catalyzes the NADPH-dependent reduction of N-acetyl-5-glutamyl phosphate to yield N-acetyl-L-glutamate 5-semialdehyde. The protein is N-acetyl-gamma-glutamyl-phosphate reductase of Cereibacter sphaeroides (strain KD131 / KCTC 12085) (Rhodobacter sphaeroides).